Here is a 749-residue protein sequence, read N- to C-terminus: NAD(P)H-quinone oxidoreductase subunit 5, chloroplastic (749 aa).

16 helical membrane passes run 9–29, 40–60, 89–109, 125–145, 147–167, 185–205, 221–241, 260–280, 285–305, 329–349, 356–376, 398–418, 427–447, 553–573, 607–627, and 727–747; these read WIIP…LLLF, WSFT…NLSI, IDPL…MVLI, FAYM…SNLI, IYIF…FWFT, GDFG…SFEF, NGTN…GAVA, TPIS…FLVA, LFIV…ITIL, LGYT…FHLI, ALLF…VGYS, NTFL…CFWS, WLYS…TAFY, LFPL…GIPF, FVIN…LASL, and SYLF…YFFL.

The protein belongs to the complex I subunit 5 family. In terms of assembly, NDH is composed of at least 16 different subunits, 5 of which are encoded in the nucleus.

It is found in the plastid. It localises to the chloroplast thylakoid membrane. The enzyme catalyses a plastoquinone + NADH + (n+1) H(+)(in) = a plastoquinol + NAD(+) + n H(+)(out). It carries out the reaction a plastoquinone + NADPH + (n+1) H(+)(in) = a plastoquinol + NADP(+) + n H(+)(out). In terms of biological role, NDH shuttles electrons from NAD(P)H:plastoquinone, via FMN and iron-sulfur (Fe-S) centers, to quinones in the photosynthetic chain and possibly in a chloroplast respiratory chain. The immediate electron acceptor for the enzyme in this species is believed to be plastoquinone. Couples the redox reaction to proton translocation, and thus conserves the redox energy in a proton gradient. The protein is NAD(P)H-quinone oxidoreductase subunit 5, chloroplastic (ndhF) of Vitis vinifera (Grape).